We begin with the raw amino-acid sequence, 131 residues long: Small ribosomal subunit protein eS8 (131 aa).

Residues aspartate 11–proline 36 are disordered. Residues serine 16–alanine 30 show a composition bias toward basic residues.

The protein belongs to the eukaryotic ribosomal protein eS8 family. In terms of assembly, part of the 30S ribosomal subunit.

In Pyrobaculum islandicum (strain DSM 4184 / JCM 9189 / GEO3), this protein is Small ribosomal subunit protein eS8.